Reading from the N-terminus, the 77-residue chain is Translation initiation factor IF-1, chloroplastic (77 aa).

Residues 1–71 (MKEQKLIHEG…TRGRIIYRLR (71 aa)) form the S1-like domain.

This sequence belongs to the IF-1 family. As to quaternary structure, component of the 30S ribosomal translation pre-initiation complex which assembles on the 30S ribosome in the order IF-2 and IF-3, IF-1 and N-formylmethionyl-tRNA(fMet); mRNA recruitment can occur at any time during PIC assembly.

Its subcellular location is the plastid. The protein localises to the chloroplast. Functionally, one of the essential components for the initiation of protein synthesis. Stabilizes the binding of IF-2 and IF-3 on the 30S subunit to which N-formylmethionyl-tRNA(fMet) subsequently binds. Helps modulate mRNA selection, yielding the 30S pre-initiation complex (PIC). Upon addition of the 50S ribosomal subunit IF-1, IF-2 and IF-3 are released leaving the mature 70S translation initiation complex. The protein is Translation initiation factor IF-1, chloroplastic of Calycanthus floridus var. glaucus (Eastern sweetshrub).